Consider the following 197-residue polypeptide: MSHFFAHLSRLKLINRWPLMRNVRTENVSEHSLQVAFVAHALAIIKNRKFGGNVNAERIALLAMYHDASEVITGDLPTPVKYHNPHIAREYKKIEKIAQKKLLEMLPTELQEDFRPILDDSQHTTEETFIIKQADSLCAYLKCLEELSAGNHEFNLAIARLEKTLADRHSQEMDYFMKVFVPGFSLSLDEISLDIPH.

Substrate is bound by residues 16 to 17 (RW) and His31. The region spanning 28-140 (VSEHSLQVAF…IKQADSLCAY (113 aa)) is the HD domain. 3 residues coordinate a divalent metal cation: His31, His66, and Asp67. Residues Asp67, 75 to 78 (DLPT), and Asp135 contribute to the substrate site. Asp135 contributes to the a divalent metal cation binding site.

The protein belongs to the 5DNU family. As to quaternary structure, homodimer. Requires a divalent metal cation as cofactor.

It localises to the cytoplasm. The catalysed reaction is a 2'-deoxyribonucleoside 5'-phosphate + H2O = a 2'-deoxyribonucleoside + phosphate. In terms of biological role, catalyzes the strictly specific dephosphorylation of 2'-deoxyribonucleoside 5'-monophosphates. The chain is 5'-deoxynucleotidase plu3092 from Photorhabdus laumondii subsp. laumondii (strain DSM 15139 / CIP 105565 / TT01) (Photorhabdus luminescens subsp. laumondii).